Reading from the N-terminus, the 278-residue chain is DNA repair protein RecO (278 aa).

Over residues 1–12 (MGTNDALTSTED) the composition is skewed to polar residues. Positions 1–41 (MGTNDALTSTEDAVTAGANDAPLPAPPEPPRKARRATSRTS) are disordered.

This sequence belongs to the RecO family.

Functionally, involved in DNA repair and RecF pathway recombination. The sequence is that of DNA repair protein RecO from Burkholderia orbicola (strain AU 1054).